A 259-amino-acid chain; its full sequence is Protein FAM220A (259 aa).

The disordered stretch occupies residues glycine 29 to serine 66. Residues proline 39 to aspartate 49 show a composition bias toward polar residues.

In terms of assembly, interacts with transcriptional activator STAT3; the interaction occurs in both the nucleus and the cytoplasm, is enhanced by IL6 and promotes STAT3 dephosphorylation, leading to negative regulation of STAT3 transcriptional activator activity. Can interact with both unphosphorylated and phosphorylated STAT3 but interacts preferentially with phosphorylated STAT3 in the nucleus. Interacts with protein phosphatase PTPN2/TC45; this promotes interaction of PTPN2 with STAT3, leading to dephosphorylation of STAT3 by PTPN2.

It localises to the nucleus. The protein resides in the cytoplasm. Its subcellular location is the cytoplasmic vesicle. The protein localises to the secretory vesicle. It is found in the acrosome. In terms of biological role, promotes dephosphorylation of transcriptional activator STAT3 by interacting with both STAT3 and protein phosphatase PTPN2. This promotes interaction of PTPN2 with STAT3 and mediates STAT3 dephosphorylation by PTPN2, leading to negative regulation of STAT3 transcriptional activator activity. May be required for spermiogenesis or sperm function. The sequence is that of Protein FAM220A (Fam220a) from Rattus norvegicus (Rat).